Reading from the N-terminus, the 414-residue chain is Glutathione gamma-glutamylcysteinyltransferase (414 aa).

A Peptidase C83 domain is found at 37–256; sequence QLKKSFYKRQ…GYVLLEPMHI (220 aa).

This sequence belongs to the phytochelatin synthase family.

It carries out the reaction [Glu(-Cys)](n)-Gly + glutathione + H(+) = [Glu(-Cys)](n+1)-Gly + glycine. Its function is as follows. Required for detoxification of heavy metals such as cadmium and arsenate. The chain is Glutathione gamma-glutamylcysteinyltransferase from Schizosaccharomyces pombe (strain 972 / ATCC 24843) (Fission yeast).